We begin with the raw amino-acid sequence, 129 residues long: Snaclec coagulation factor IX-binding protein subunit A (129 aa).

The C-type lectin domain maps to 1 to 129 (DCPSGWSSYE…GQQNPFVCEA (129 aa)). Cystine bridges form between cysteine 2–cysteine 13, cysteine 30–cysteine 127, and cysteine 102–cysteine 119. Residues serine 41, glutamate 43, and glutamate 47 each contribute to the Ca(2+) site. Glutamate 128 lines the Ca(2+) pocket.

The protein belongs to the snaclec family. In terms of assembly, heterodimer of subunits A and B; disulfide-linked. Expressed by the venom gland.

The protein localises to the secreted. Anticoagulant protein which binds to the gamma-carboxyglutamic acid-domain regions of factor IX (F9) (but not factor X) in the presence of calcium with a 1 to 1 stoichiometry. The polypeptide is Snaclec coagulation factor IX-binding protein subunit A (Protobothrops flavoviridis (Habu)).